A 600-amino-acid polypeptide reads, in one-letter code: Putative acetyltransferase MPN_114 (600 aa).

His-323 serves as the catalytic Proton acceptor. 396–409 (TKPLIKAKGIKNSE) serves as a coordination point for CoA.

Belongs to the carnitine/choline acetyltransferase family.

This is Putative acetyltransferase MPN_114 from Mycoplasma pneumoniae (strain ATCC 29342 / M129 / Subtype 1) (Mycoplasmoides pneumoniae).